The primary structure comprises 293 residues: Bifunctional protein FolD (293 aa).

Residues 164–166 (GRS), Ser193, and Thr234 each bind NADP(+).

The protein belongs to the tetrahydrofolate dehydrogenase/cyclohydrolase family. In terms of assembly, homodimer.

The enzyme catalyses (6R)-5,10-methylene-5,6,7,8-tetrahydrofolate + NADP(+) = (6R)-5,10-methenyltetrahydrofolate + NADPH. It carries out the reaction (6R)-5,10-methenyltetrahydrofolate + H2O = (6R)-10-formyltetrahydrofolate + H(+). It functions in the pathway one-carbon metabolism; tetrahydrofolate interconversion. In terms of biological role, catalyzes the oxidation of 5,10-methylenetetrahydrofolate to 5,10-methenyltetrahydrofolate and then the hydrolysis of 5,10-methenyltetrahydrofolate to 10-formyltetrahydrofolate. The sequence is that of Bifunctional protein FolD from Phocaeicola vulgatus (strain ATCC 8482 / DSM 1447 / JCM 5826 / CCUG 4940 / NBRC 14291 / NCTC 11154) (Bacteroides vulgatus).